A 227-amino-acid polypeptide reads, in one-letter code: Cytidylate kinase (227 aa).

12–20 (GPSGAGKGT) is a binding site for ATP.

The protein belongs to the cytidylate kinase family. Type 1 subfamily.

It localises to the cytoplasm. The enzyme catalyses CMP + ATP = CDP + ADP. It catalyses the reaction dCMP + ATP = dCDP + ADP. The chain is Cytidylate kinase from Shigella boydii serotype 4 (strain Sb227).